The primary structure comprises 75 residues: Alpha-elapitoxin-Bc2a (75 aa).

Residues 1 to 2 (YT) form the signal peptide. 5 disulfides stabilise this stretch: C5–C24, C17–C45, C30–C34, C49–C60, and C61–C66.

This sequence belongs to the three-finger toxin family. Long-chain subfamily. Type II alpha-neurotoxin sub-subfamily. Monomer in solution, homodimer in crystal state. Expressed by the venom gland.

The protein localises to the secreted. In terms of biological role, binds to muscular and neuronal nicotinic acetylcholine receptor (nAChR) and inhibits acetylcholine from binding to the receptor, thereby impairing neuromuscular and neuronal transmission. Reversibly blocks chick and mouse muscle nicotinic acetylcholine receptors. Blocks muscle type nAChR with an IC(50)=30 nM, when heterologously expressed in oocytes. Also binds with high affinity to alpha-7/CHRNA7 nAChRs. In addition, shows a weak inhibition of neuronal alpha-3-beta-2/CHRNA3-CHRNB2 nAChR (IC(50)=2.9 uM). Selectively binds to alpha-1-delta subunit interface of the mouse muscle nicotinic acetylcholine receptor, with a 10-fold higher affinity for the adult than for the fetal receptors. In vivo, when intraperitoneally injected into mice, causes flaccid paralysis and respiratory distress, followed by death within 2-4 hours. This Bungarus candidus (Malayan krait) protein is Alpha-elapitoxin-Bc2a.